The following is a 132-amino-acid chain: Protein NrdI (132 aa).

Belongs to the NrdI family.

In terms of biological role, probably involved in ribonucleotide reductase function. The polypeptide is Protein NrdI (Staphylococcus epidermidis (strain ATCC 35984 / DSM 28319 / BCRC 17069 / CCUG 31568 / BM 3577 / RP62A)).